Reading from the N-terminus, the 514-residue chain is Bifunctional purine biosynthesis protein PurH (514 aa).

The MGS-like domain maps to 1–145 (MIKRALISVS…KNYQDVAVIV (145 aa)).

The protein belongs to the PurH family.

The catalysed reaction is (6R)-10-formyltetrahydrofolate + 5-amino-1-(5-phospho-beta-D-ribosyl)imidazole-4-carboxamide = 5-formamido-1-(5-phospho-D-ribosyl)imidazole-4-carboxamide + (6S)-5,6,7,8-tetrahydrofolate. It carries out the reaction IMP + H2O = 5-formamido-1-(5-phospho-D-ribosyl)imidazole-4-carboxamide. The protein operates within purine metabolism; IMP biosynthesis via de novo pathway; 5-formamido-1-(5-phospho-D-ribosyl)imidazole-4-carboxamide from 5-amino-1-(5-phospho-D-ribosyl)imidazole-4-carboxamide (10-formyl THF route): step 1/1. It participates in purine metabolism; IMP biosynthesis via de novo pathway; IMP from 5-formamido-1-(5-phospho-D-ribosyl)imidazole-4-carboxamide: step 1/1. The protein is Bifunctional purine biosynthesis protein PurH of Ruminiclostridium cellulolyticum (strain ATCC 35319 / DSM 5812 / JCM 6584 / H10) (Clostridium cellulolyticum).